Here is a 299-residue protein sequence, read N- to C-terminus: Lipoyl synthase 2 (299 aa).

[4Fe-4S] cluster contacts are provided by cysteine 43, cysteine 48, cysteine 54, cysteine 69, cysteine 73, cysteine 76, and serine 294. Positions 55–283 (YAAGTATFLL…GAVARDLGFA (229 aa)) constitute a Radical SAM core domain.

The protein belongs to the radical SAM superfamily. Lipoyl synthase family. Requires [4Fe-4S] cluster as cofactor.

The protein localises to the cytoplasm. The catalysed reaction is [[Fe-S] cluster scaffold protein carrying a second [4Fe-4S](2+) cluster] + N(6)-octanoyl-L-lysyl-[protein] + 2 oxidized [2Fe-2S]-[ferredoxin] + 2 S-adenosyl-L-methionine + 4 H(+) = [[Fe-S] cluster scaffold protein] + N(6)-[(R)-dihydrolipoyl]-L-lysyl-[protein] + 4 Fe(3+) + 2 hydrogen sulfide + 2 5'-deoxyadenosine + 2 L-methionine + 2 reduced [2Fe-2S]-[ferredoxin]. The protein operates within protein modification; protein lipoylation via endogenous pathway; protein N(6)-(lipoyl)lysine from octanoyl-[acyl-carrier-protein]: step 2/2. Its function is as follows. Catalyzes the radical-mediated insertion of two sulfur atoms into the C-6 and C-8 positions of the octanoyl moiety bound to the lipoyl domains of lipoate-dependent enzymes, thereby converting the octanoylated domains into lipoylated derivatives. The polypeptide is Lipoyl synthase 2 (Parasynechococcus marenigrum (strain WH8102)).